The following is a 455-amino-acid chain: 3-phosphoshikimate 1-carboxyvinyltransferase (455 aa).

The segment covering 1–19 (MSHGASSRPATARKSSGLS) has biased composition (polar residues). The disordered stretch occupies residues 1–25 (MSHGASSRPATARKSSGLSGTVRIP). Lys-28 serves as a coordination point for phosphoenolpyruvate. The 3-phosphoshikimate site is built by Ser-29 and Arg-33. Residue Arg-128 participates in phosphoenolpyruvate binding. 3-phosphoshikimate contacts are provided by Ser-173, Ala-174, Gln-175, Asp-326, and Lys-353. A phosphoenolpyruvate-binding site is contributed by Gln-175. Asp-326 (proton acceptor) is an active-site residue. The phosphoenolpyruvate site is built by Arg-357 and Arg-405.

It belongs to the EPSP synthase family. In terms of assembly, monomer.

It localises to the cytoplasm. The catalysed reaction is 3-phosphoshikimate + phosphoenolpyruvate = 5-O-(1-carboxyvinyl)-3-phosphoshikimate + phosphate. The protein operates within metabolic intermediate biosynthesis; chorismate biosynthesis; chorismate from D-erythrose 4-phosphate and phosphoenolpyruvate: step 6/7. Its activity is regulated as follows. Is resistant to inhibition by glyphosate (glyphosate-tolerant) like other members of class II EPSPS, in contrast to class I EPSPS, which is glyphosate-sensitive. Is much less sensitive to inhibition by the (R)-difluoromethyl and (R)-phosphonate analogs of the tetrahedral reaction intermediate than the representative class I EPSPS from E.coli. Is highly activated in the presence of cations, such as NH4(+), Rb(+), and K(+). Functionally, catalyzes the transfer of the enolpyruvyl moiety of phosphoenolpyruvate (PEP) to the 5-hydroxyl of shikimate-3-phosphate (S3P) to produce enolpyruvyl shikimate-3-phosphate and inorganic phosphate. The sequence is that of 3-phosphoshikimate 1-carboxyvinyltransferase from Agrobacterium sp. (strain CP4).